Reading from the N-terminus, the 508-residue chain is ATP synthase subunit alpha, chloroplastic (508 aa).

173–180 (GDRQTGKT) lines the ATP pocket.

The protein belongs to the ATPase alpha/beta chains family. In terms of assembly, F-type ATPases have 2 components, CF(1) - the catalytic core - and CF(0) - the membrane proton channel. CF(1) has five subunits: alpha(3), beta(3), gamma(1), delta(1), epsilon(1). CF(0) has four main subunits: a, b, b' and c.

It is found in the plastid. The protein localises to the chloroplast thylakoid membrane. It carries out the reaction ATP + H2O + 4 H(+)(in) = ADP + phosphate + 5 H(+)(out). In terms of biological role, produces ATP from ADP in the presence of a proton gradient across the membrane. The alpha chain is a regulatory subunit. In Chara vulgaris (Common stonewort), this protein is ATP synthase subunit alpha, chloroplastic.